Here is a 261-residue protein sequence, read N- to C-terminus: Cytochrome c oxidase subunit 3 (261 aa).

The Mitochondrial matrix portion of the chain corresponds to 1-15 (MTHQTHAYHMVNPSP). Residues 16–34 (WPLTGALSALLMTSGLIMW) traverse the membrane as a helical segment. Residues 35 to 40 (FHFNST) are Mitochondrial intermembrane-facing. Residues 41–66 (TLLMLGLTTNMLTMYQWWRDIIREST) traverse the membrane as a helical segment. At 67 to 72 (FQGHHT) the chain is on the mitochondrial matrix side. The helical transmembrane segment at 73-105 (PNVQKGLRYGMILFIISEVLFFTGFFWAFYHSS) threads the bilayer. Residues 106–128 (LAPTPELGGCWPPTGIHPLNPLE) are Mitochondrial intermembrane-facing. Residues 129–152 (VPLLNTSVLLASGVSITWAHHSLM) traverse the membrane as a helical segment. Over 153 to 155 (EGN) the chain is Mitochondrial matrix. Residues 156–183 (RNHMLQALFITIALGVYFTLLQASEYYE) form a helical membrane-spanning segment. Residues 184–190 (APFTISD) lie on the Mitochondrial intermembrane side of the membrane. Residues 191-223 (GVYGSTFFVATGFHGLHVIIGSTFLIVCFFRQL) form a helical membrane-spanning segment. Over 224–232 (KFHFTSSHH) the chain is Mitochondrial matrix. Residues 233-256 (FGFEAAAWYWHFVDVVWLFLYVSI) form a helical membrane-spanning segment. Topologically, residues 257 to 261 (YWWGS) are mitochondrial intermembrane.

It belongs to the cytochrome c oxidase subunit 3 family. Component of the cytochrome c oxidase (complex IV, CIV), a multisubunit enzyme composed of 14 subunits. The complex is composed of a catalytic core of 3 subunits MT-CO1, MT-CO2 and MT-CO3, encoded in the mitochondrial DNA, and 11 supernumerary subunits COX4I, COX5A, COX5B, COX6A, COX6B, COX6C, COX7A, COX7B, COX7C, COX8 and NDUFA4, which are encoded in the nuclear genome. The complex exists as a monomer or a dimer and forms supercomplexes (SCs) in the inner mitochondrial membrane with NADH-ubiquinone oxidoreductase (complex I, CI) and ubiquinol-cytochrome c oxidoreductase (cytochrome b-c1 complex, complex III, CIII), resulting in different assemblies (supercomplex SCI(1)III(2)IV(1) and megacomplex MCI(2)III(2)IV(2)).

The protein localises to the mitochondrion inner membrane. The enzyme catalyses 4 Fe(II)-[cytochrome c] + O2 + 8 H(+)(in) = 4 Fe(III)-[cytochrome c] + 2 H2O + 4 H(+)(out). In terms of biological role, component of the cytochrome c oxidase, the last enzyme in the mitochondrial electron transport chain which drives oxidative phosphorylation. The respiratory chain contains 3 multisubunit complexes succinate dehydrogenase (complex II, CII), ubiquinol-cytochrome c oxidoreductase (cytochrome b-c1 complex, complex III, CIII) and cytochrome c oxidase (complex IV, CIV), that cooperate to transfer electrons derived from NADH and succinate to molecular oxygen, creating an electrochemical gradient over the inner membrane that drives transmembrane transport and the ATP synthase. Cytochrome c oxidase is the component of the respiratory chain that catalyzes the reduction of oxygen to water. Electrons originating from reduced cytochrome c in the intermembrane space (IMS) are transferred via the dinuclear copper A center (CU(A)) of subunit 2 and heme A of subunit 1 to the active site in subunit 1, a binuclear center (BNC) formed by heme A3 and copper B (CU(B)). The BNC reduces molecular oxygen to 2 water molecules using 4 electrons from cytochrome c in the IMS and 4 protons from the mitochondrial matrix. The protein is Cytochrome c oxidase subunit 3 (MT-CO3) of Litocranius walleri (Gerenuk).